Here is a 266-residue protein sequence, read N- to C-terminus: Flavin-dependent thymidylate synthase (266 aa).

Residues 11–222 (GFIRLVDYMG…PLACASFERH (212 aa)) enclose the ThyX domain. FAD is bound by residues serine 57, 80 to 82 (RHR), and glutamate 88. DUMP is bound by residues 77–80 (QWIR), 88–92 (EISGR), and arginine 161. The ThyX motif signature appears at 80 to 90 (RHRTARLNEIS). FAD is bound by residues 177 to 179 (DLH) and histidine 183. A dUMP-binding site is contributed by arginine 188. Arginine 188 serves as the catalytic Involved in ionization of N3 of dUMP, leading to its activation.

Belongs to the thymidylate synthase ThyX family. In terms of assembly, homotetramer. FAD is required as a cofactor.

The catalysed reaction is dUMP + (6R)-5,10-methylene-5,6,7,8-tetrahydrofolate + NADPH + H(+) = dTMP + (6S)-5,6,7,8-tetrahydrofolate + NADP(+). Its pathway is pyrimidine metabolism; dTTP biosynthesis. Functionally, catalyzes the reductive methylation of 2'-deoxyuridine-5'-monophosphate (dUMP) to 2'-deoxythymidine-5'-monophosphate (dTMP) while utilizing 5,10-methylenetetrahydrofolate (mTHF) as the methyl donor, and NADPH and FADH(2) as the reductant. The protein is Flavin-dependent thymidylate synthase of Treponema denticola (strain ATCC 35405 / DSM 14222 / CIP 103919 / JCM 8153 / KCTC 15104).